A 697-amino-acid polypeptide reads, in one-letter code: Phosphate acetyltransferase (697 aa).

Residues 366–697 (MFEHKLLEQA…QSPTEKASAQ (332 aa)) form a phosphate acetyltransferase region.

This sequence in the N-terminal section; belongs to the CobB/CobQ family. It in the C-terminal section; belongs to the phosphate acetyltransferase and butyryltransferase family. Homohexamer.

The protein resides in the cytoplasm. It carries out the reaction acetyl-CoA + phosphate = acetyl phosphate + CoA. It participates in metabolic intermediate biosynthesis; acetyl-CoA biosynthesis; acetyl-CoA from acetate: step 2/2. Functionally, involved in acetate metabolism. This Streptomyces coelicolor (strain ATCC BAA-471 / A3(2) / M145) protein is Phosphate acetyltransferase (pta).